The chain runs to 236 residues: UPF0257 lipoprotein YnfC (236 aa).

An N-terminal signal peptide occupies residues 1-16 (MKYKLLPCLLAILLTG). Residue Cys17 is the site of N-palmitoyl cysteine attachment. The S-diacylglycerol cysteine moiety is linked to residue Cys17.

It belongs to the UPF0257 family.

The protein resides in the cell membrane. This is UPF0257 lipoprotein YnfC from Escherichia coli O81 (strain ED1a).